Consider the following 507-residue polypeptide: Probable serine/threonine-protein kinase DDB_G0268078 (507 aa).

Positions Tyr4–Phe286 constitute a Protein kinase domain. ATP-binding positions include Val10–Val18 and Lys33. Residue Asp125 is the Proton acceptor of the active site. A compositionally biased stretch (low complexity) spans Asn323–Asn347. Disordered stretches follow at residues Asn323 to Ser364, Asn381 to Ser404, and Gln428 to Leu507. Residues Gln348–Pro361 are compositionally biased toward polar residues. The segment covering Asn381–Asn399 has biased composition (low complexity). Residues Gln429 to Ile450 are compositionally biased toward pro residues. The segment covering Leu451–Ser470 has biased composition (low complexity). 2 stretches are compositionally biased toward polar residues: residues Lys471–Leu481 and Arg491–Leu507.

The protein belongs to the protein kinase superfamily. CMGC Ser/Thr protein kinase family. CDC2/CDKX subfamily.

It catalyses the reaction L-seryl-[protein] + ATP = O-phospho-L-seryl-[protein] + ADP + H(+). It carries out the reaction L-threonyl-[protein] + ATP = O-phospho-L-threonyl-[protein] + ADP + H(+). The chain is Probable serine/threonine-protein kinase DDB_G0268078 from Dictyostelium discoideum (Social amoeba).